A 281-amino-acid polypeptide reads, in one-letter code: Digeranylgeranylglyceryl phosphate synthase (281 aa).

8 helical membrane-spanning segments follow: residues 7–27, 32–52, 72–91, 95–117, 128–148, 193–213, 214–234, and 258–278; these read ILRPVNAVMAVITVMLMALIT, FSVLLASVVVFTATGAGNVIN, GRISRGVAGVYSIILFALAS, FYLGLLPGLVVVSSSLLMVYYAW, ITISFLTGLSFVFGGIVLGEV, ISGVLAASFMLIASLTSPSLY, LLGIFSALYIPVLLLAVAVFL, and VGMALTFIAFAAGSGTITALT.

Belongs to the UbiA prenyltransferase family. DGGGP synthase subfamily. The cofactor is Mg(2+).

Its subcellular location is the cell membrane. The enzyme catalyses sn-3-O-(geranylgeranyl)glycerol 1-phosphate + (2E,6E,10E)-geranylgeranyl diphosphate = 2,3-bis-O-(geranylgeranyl)-sn-glycerol 1-phosphate + diphosphate. It functions in the pathway membrane lipid metabolism; glycerophospholipid metabolism. Its function is as follows. Prenyltransferase that catalyzes the transfer of the geranylgeranyl moiety of geranylgeranyl diphosphate (GGPP) to the C2 hydroxyl of (S)-3-O-geranylgeranylglyceryl phosphate (GGGP). This reaction is the second ether-bond-formation step in the biosynthesis of archaeal membrane lipids. The sequence is that of Digeranylgeranylglyceryl phosphate synthase from Methanothermobacter thermautotrophicus (strain ATCC 29096 / DSM 1053 / JCM 10044 / NBRC 100330 / Delta H) (Methanobacterium thermoautotrophicum).